The chain runs to 255 residues: 4-hydroxy-tetrahydrodipicolinate reductase (255 aa).

NAD(+) is bound by residues 9–14, 89–91, and 115–118; these read GFKGKM, GTT, and APNF. Catalysis depends on His-145, which acts as the Proton donor/acceptor. Position 146 (His-146) interacts with (S)-2,3,4,5-tetrahydrodipicolinate. Catalysis depends on Lys-149, which acts as the Proton donor. 155–156 is a binding site for (S)-2,3,4,5-tetrahydrodipicolinate; sequence GT.

It belongs to the DapB family.

The protein resides in the cytoplasm. It catalyses the reaction (S)-2,3,4,5-tetrahydrodipicolinate + NAD(+) + H2O = (2S,4S)-4-hydroxy-2,3,4,5-tetrahydrodipicolinate + NADH + H(+). The catalysed reaction is (S)-2,3,4,5-tetrahydrodipicolinate + NADP(+) + H2O = (2S,4S)-4-hydroxy-2,3,4,5-tetrahydrodipicolinate + NADPH + H(+). The protein operates within amino-acid biosynthesis; L-lysine biosynthesis via DAP pathway; (S)-tetrahydrodipicolinate from L-aspartate: step 4/4. In terms of biological role, catalyzes the conversion of 4-hydroxy-tetrahydrodipicolinate (HTPA) to tetrahydrodipicolinate. The sequence is that of 4-hydroxy-tetrahydrodipicolinate reductase from Streptococcus gordonii (strain Challis / ATCC 35105 / BCRC 15272 / CH1 / DL1 / V288).